We begin with the raw amino-acid sequence, 274 residues long: tRNA pseudouridine synthase A (274 aa).

The active-site Nucleophile is the D52. Y110 serves as a coordination point for substrate.

It belongs to the tRNA pseudouridine synthase TruA family. In terms of assembly, homodimer.

The enzyme catalyses uridine(38/39/40) in tRNA = pseudouridine(38/39/40) in tRNA. In terms of biological role, formation of pseudouridine at positions 38, 39 and 40 in the anticodon stem and loop of transfer RNAs. This is tRNA pseudouridine synthase A from Ralstonia nicotianae (strain ATCC BAA-1114 / GMI1000) (Ralstonia solanacearum).